The primary structure comprises 179 residues: Acireductone dioxygenase (179 aa).

The disordered stretch occupies residues 1–21 (MVQAWYMDDSTEDQRKPHHLQ). Fe(2+)-binding residues include His-88, His-90, Glu-94, and His-133. His-88, His-90, Glu-94, and His-133 together coordinate Ni(2+).

It belongs to the acireductone dioxygenase (ARD) family. Monomer. Interacts with MMP14. Fe(2+) serves as cofactor. The cofactor is Ni(2+).

It localises to the cytoplasm. The protein resides in the nucleus. The protein localises to the cell membrane. It catalyses the reaction 1,2-dihydroxy-5-(methylsulfanyl)pent-1-en-3-one + O2 = 4-methylsulfanyl-2-oxobutanoate + formate + 2 H(+). The catalysed reaction is 1,2-dihydroxy-5-(methylsulfanyl)pent-1-en-3-one + O2 = 3-(methylsulfanyl)propanoate + CO + formate + 2 H(+). It participates in amino-acid biosynthesis; L-methionine biosynthesis via salvage pathway; L-methionine from S-methyl-5-thio-alpha-D-ribose 1-phosphate: step 5/6. Functionally, catalyzes 2 different reactions between oxygen and the acireductone 1,2-dihydroxy-3-keto-5-methylthiopentene (DHK-MTPene) depending upon the metal bound in the active site. Fe-containing acireductone dioxygenase (Fe-ARD) produces formate and 2-keto-4-methylthiobutyrate (KMTB), the alpha-ketoacid precursor of methionine in the methionine recycle pathway. Ni-containing acireductone dioxygenase (Ni-ARD) produces methylthiopropionate, carbon monoxide and formate, and does not lie on the methionine recycle pathway. This is Acireductone dioxygenase (adi1) from Xenopus tropicalis (Western clawed frog).